A 443-amino-acid polypeptide reads, in one-letter code: MSFSRNQVLKGLKTKKAKPKKNPTVDELFEIAIDLEESGDRWRLEPAKCLRFYQKSLETYDRYLLQCPNDFDARFNKARLLLNMATNCDMLYKDSQVCLQKSIEMHKHALLLQEAPDIWFNLAQVHLNLAEIWVDLDREDLAYPEIQQALQSISHSIDLQERERIEWENTIQTSSQQKYEEIPDIQARRLYFIEADKEASTLVTEIASLACSCKLLEESDFEKLCQIMLPITEKLDILKLMDWYLAKTKRLVLGGKENEVAWIDLLQVFDHQLSQLPQLNLQNPLDPNSSVKPLHIQLLCDKADAYIDFAETLLDSCVSTEESASIEIMTRAWNMLGVAAKSLKMANTYNPNHVRILISRADLEIQRAAIPIMVAQNSKLVLYKNAKVLYEKAFRDYSTKKTTRTFAEIVLKHYQLQKLTNPETIKMLDSLTEVAQEDILNTI.

This sequence belongs to the UPF0656 family.

It localises to the cytoplasm. Its subcellular location is the nucleus. The sequence is that of UPF0656 protein C926.02 from Schizosaccharomyces pombe (strain 972 / ATCC 24843) (Fission yeast).